Reading from the N-terminus, the 230-residue chain is Flagellar L-ring protein (230 aa).

Residues 1 to 21 form the signal peptide; that stretch reads MMLKTVLRLPVCAALLALAAG. Cys22 carries the N-palmitoyl cysteine lipid modification. The S-diacylglycerol cysteine moiety is linked to residue Cys22. Residues 34–53 form a disordered region; sequence PLTAPPPPPPQPSARPNGSI. A compositionally biased stretch (pro residues) spans 36–46; it reads TAPPPPPPQPS.

This sequence belongs to the FlgH family. As to quaternary structure, the basal body constitutes a major portion of the flagellar organelle and consists of four rings (L,P,S, and M) mounted on a central rod.

It is found in the cell outer membrane. Its subcellular location is the bacterial flagellum basal body. Functionally, assembles around the rod to form the L-ring and probably protects the motor/basal body from shearing forces during rotation. In Bordetella bronchiseptica (strain ATCC BAA-588 / NCTC 13252 / RB50) (Alcaligenes bronchisepticus), this protein is Flagellar L-ring protein.